A 325-amino-acid polypeptide reads, in one-letter code: Ribosomal RNA small subunit methyltransferase H (325 aa).

S-adenosyl-L-methionine contacts are provided by residues 42–44 (GGH), aspartate 62, phenylalanine 86, aspartate 105, and glutamine 112.

This sequence belongs to the methyltransferase superfamily. RsmH family.

Its subcellular location is the cytoplasm. It catalyses the reaction cytidine(1402) in 16S rRNA + S-adenosyl-L-methionine = N(4)-methylcytidine(1402) in 16S rRNA + S-adenosyl-L-homocysteine + H(+). Its function is as follows. Specifically methylates the N4 position of cytidine in position 1402 (C1402) of 16S rRNA. The chain is Ribosomal RNA small subunit methyltransferase H from Cupriavidus metallidurans (strain ATCC 43123 / DSM 2839 / NBRC 102507 / CH34) (Ralstonia metallidurans).